The following is a 210-amino-acid chain: Syntaxin-binding protein 6 (210 aa).

Serine 2 carries the N-acetylserine modification. In terms of domain architecture, v-SNARE coiled-coil homology spans 151-210 (GNSILHSAADSVTSAVQKASQALNERGERLGRAEEKTEDLKNSAQQFAETAHKLAMKHKC).

Part of a ternary complex containing SNAP25 and STX1A that can be dissociated by NAPA and NSF. Interacts with STX4A. In terms of tissue distribution, detected at low levels in brain, and at very low levels in heart, adrenal gland, testis, liver and kidney.

It is found in the cytoplasm. The protein localises to the membrane. In terms of biological role, forms non-fusogenic complexes with SNAP25 and STX1A and may thereby modulate the formation of functional SNARE complexes and exocytosis. The polypeptide is Syntaxin-binding protein 6 (STXBP6) (Homo sapiens (Human)).